A 299-amino-acid chain; its full sequence is Ribosomal RNA small subunit methyltransferase H (299 aa).

S-adenosyl-L-methionine contacts are provided by residues 35-37 (GGH), D54, Y80, D101, and Q108.

This sequence belongs to the methyltransferase superfamily. RsmH family.

The protein localises to the cytoplasm. The enzyme catalyses cytidine(1402) in 16S rRNA + S-adenosyl-L-methionine = N(4)-methylcytidine(1402) in 16S rRNA + S-adenosyl-L-homocysteine + H(+). In terms of biological role, specifically methylates the N4 position of cytidine in position 1402 (C1402) of 16S rRNA. The polypeptide is Ribosomal RNA small subunit methyltransferase H (Coprothermobacter proteolyticus (strain ATCC 35245 / DSM 5265 / OCM 4 / BT)).